Reading from the N-terminus, the 512-residue chain is METPTPPLPSKDQLFPPLIQLVRALLWVLVITIGGAIVQRLFFHPLRKIPGPLTAAISGWDEFYHNIWRDGEWCKTYPKLHKEYNSPVIRIGPNHVHLNDIDAYETVFRVGTNFYKDKTFYTCADNDGSIFSLCDRDEHSERRKVLSSLFSKQAAEMTAPKVMSKLNELLDFMITQSKEGKACNITDLFRALAINWVADTLLGDCGDVVTYAETKPDLLEDIDGLSKLIPTLRFFPYLIPTLNSLAPSTSPAGVAKFKKICENYTRPRINDPIKNISQRSRASVVELLIAHRHEVYHKPPTVDYLAEEAFTFIDAGVDTTGGTLVAAIYHILRDPGILRRLREELDESQLFLSKGTPIDFKKLGNLPYLNAVINESHRIWPALPGPLPRVVPPEGLQVGSFFVPSGTILSSTHHCLHYNETVFPEPKKFKPERWLRTDKWEGDRYLNPYSRGSRACIGINLAQMELRLTLGHLFSHYDLQLCEPTLSSLEWKDHFVAHPKAPVMIHIGFRKA.

The chain crosses the membrane as a helical span at residues 18–38 (LIQLVRALLWVLVITIGGAIV). N-linked (GlcNAc...) asparagine glycosylation is found at asparagine 184, asparagine 263, asparagine 275, asparagine 374, and asparagine 419. Cysteine 456 is a heme binding site.

The protein belongs to the cytochrome P450 family. Requires heme as cofactor.

It is found in the membrane. It carries out the reaction hancockiamide A + reduced [NADPH--hemoprotein reductase] + O2 = hancockiamide G + oxidized [NADPH--hemoprotein reductase] + 2 H2O + H(+). The catalysed reaction is hancockiamide B + reduced [NADPH--hemoprotein reductase] + O2 = hancockiamide C + oxidized [NADPH--hemoprotein reductase] + 2 H2O + H(+). It catalyses the reaction hancockiamide D + reduced [NADPH--hemoprotein reductase] + O2 = hancockiamide H + oxidized [NADPH--hemoprotein reductase] + 2 H2O + H(+). It functions in the pathway secondary metabolite biosynthesis. Cytochrome P450 monooxygenase; part of the gene cluster that mediates the biosynthesis of hancockiamides, an unusual new family of N-cinnamoylated piperazines. The NRPS hkm10 and the NmrA-like reductase hkm9 are proposed to convert two molecules of L-Phe to the intermediary piperazine called xenocockiamide A. Xenocockiamide A is then converted to hancockiamide D via a series of hydroxylations and O-methylations. The tyrosinase hkm6 may catalyze an aromatic hydroxylation, then the 2-oxoglutarate-dependent Fe(II) dioxygenase hkm4 and the FAD-dependent phenol hydroxylase hkm7 may catalyze consecutive hydroxylations to install 2 more hydroxy groups, and the methyltransferase hkm8 probably catalyzes two methylations using 2 molecules of S-adenosyl-L-methionine (SAM). The NRPS hkm11 activates and transfers trans-cinnamate supplied by the PAL hkm12 to hancockiamide D and produces hancockiamide A. NRPS Hkm11 has the flexibility to tolerate the bulky hancockiamide G as a substrate and the absence of the acetyl-transferase hkm3 opens up the opportunity for hkm11 to introduce a second N-cinnamoyl moiety. The cytochrome P450 monooxygenase hkm5 catalyzes the methylenedioxy bridge formation, converting hancockiamide A into hancockiamide G. Hkm5 can also convert hancockiamide B into hancockiamide C, and hancockiamide D into hancockiamide H. The N-acetyltransferase hkm3 finally transfers an acetyl group to 1-N of piperazine, converting hancockiamide A into hancockiamide B and hancockiamide G into hancockiamide C. In Aspergillus hancockii, this protein is Cytochrome P450 monooxygenase hkm5.